Consider the following 338-residue polypeptide: MRVYYDKDCDLSLIQAKNVTIVGYGSQGHAHAHNLKESGVDVTVALRPGSSSVAKAEAAGFKVASVPDACKTADVLMLLAPDENQKAIYEQDIAPNLKQGATLAFAHGFNIHYNQVTPRADLDVIMIAPKAPGHTVRSEFVRGAGVPDLIAVQQDATGQAKELALSYAAGVGGGRSGIIETTFKDETETDLFGEQAVLCGGAVELVKAGFETLTEAGYEPEMAYFECLHELKLIVDLMYEGGIANMNYSISNNAEYGEYVTGPEVINEQSREAMRNALKRIQNGEYAKMFISEGNSNYPSMHARRRLNAEHPVEQVGEKLRGMMPWIAANQLVDKSKN.

Residues 1–181 enclose the KARI N-terminal Rossmann domain; it reads MRVYYDKDCD…GGGRSGIIET (181 aa). NADP(+) is bound by residues 24 to 27, Arg-47, Ser-50, Ser-52, and 82 to 85; these read YGSQ and DENQ. His-107 is a catalytic residue. Gly-133 contributes to the NADP(+) binding site. A KARI C-terminal knotted domain is found at 182–327; sequence TFKDETETDL…EKLRGMMPWI (146 aa). Mg(2+)-binding residues include Asp-190, Glu-194, Glu-226, and Glu-230. Ser-251 is a binding site for substrate.

Belongs to the ketol-acid reductoisomerase family. The cofactor is Mg(2+).

The catalysed reaction is (2R)-2,3-dihydroxy-3-methylbutanoate + NADP(+) = (2S)-2-acetolactate + NADPH + H(+). It carries out the reaction (2R,3R)-2,3-dihydroxy-3-methylpentanoate + NADP(+) = (S)-2-ethyl-2-hydroxy-3-oxobutanoate + NADPH + H(+). The protein operates within amino-acid biosynthesis; L-isoleucine biosynthesis; L-isoleucine from 2-oxobutanoate: step 2/4. Its pathway is amino-acid biosynthesis; L-valine biosynthesis; L-valine from pyruvate: step 2/4. In terms of biological role, involved in the biosynthesis of branched-chain amino acids (BCAA). Catalyzes an alkyl-migration followed by a ketol-acid reduction of (S)-2-acetolactate (S2AL) to yield (R)-2,3-dihydroxy-isovalerate. In the isomerase reaction, S2AL is rearranged via a Mg-dependent methyl migration to produce 3-hydroxy-3-methyl-2-ketobutyrate (HMKB). In the reductase reaction, this 2-ketoacid undergoes a metal-dependent reduction by NADPH to yield (R)-2,3-dihydroxy-isovalerate. This chain is Ketol-acid reductoisomerase (NADP(+)), found in Chromohalobacter salexigens (strain ATCC BAA-138 / DSM 3043 / CIP 106854 / NCIMB 13768 / 1H11).